Consider the following 143-residue polypeptide: Transcriptional regulator MraZ (143 aa).

SpoVT-AbrB domains lie at 5 to 47 (EYEH…TLEE) and 76 to 119 (AVEV…DRET).

The protein belongs to the MraZ family. Forms oligomers.

The protein localises to the cytoplasm. It is found in the nucleoid. This Staphylococcus saprophyticus subsp. saprophyticus (strain ATCC 15305 / DSM 20229 / NCIMB 8711 / NCTC 7292 / S-41) protein is Transcriptional regulator MraZ.